Here is a 319-residue protein sequence, read N- to C-terminus: 1-aminocyclopropane-1-carboxylate oxidase 4 (319 aa).

The 101-residue stretch at 153 to 253 folds into the Fe2OG dioxygenase domain; the sequence is PNFGTKVSNY…RMSLASFYNP (101 aa). The Fe cation site is built by His-177, Asp-179, and His-234.

This sequence belongs to the iron/ascorbate-dependent oxidoreductase family. It depends on Fe cation as a cofactor.

It carries out the reaction 1-aminocyclopropane-1-carboxylate + L-ascorbate + O2 = ethene + L-dehydroascorbate + hydrogen cyanide + CO2 + 2 H2O. Its pathway is alkene biosynthesis; ethylene biosynthesis via S-adenosyl-L-methionine; ethylene from S-adenosyl-L-methionine: step 2/2. The polypeptide is 1-aminocyclopropane-1-carboxylate oxidase 4 (ACO4) (Petunia hybrida (Petunia)).